A 412-amino-acid polypeptide reads, in one-letter code: Argininosuccinate synthase (412 aa).

ATP is bound by residues Ala11–Ser19 and Ala37. Residues Tyr88 and Ser93 each coordinate L-citrulline. Ser116–Asn124 is a binding site for ATP. L-aspartate is bound by residues Thr120, Asn124, and Asp125. An L-citrulline-binding site is contributed by Asn124. Residues Arg128, Ser181, Ser190, Glu271, and Tyr283 each coordinate L-citrulline.

The protein belongs to the argininosuccinate synthase family. In terms of assembly, homotetramer.

The protein resides in the cytoplasm. The protein localises to the cytosol. The enzyme catalyses L-citrulline + L-aspartate + ATP = 2-(N(omega)-L-arginino)succinate + AMP + diphosphate + H(+). The protein operates within amino-acid biosynthesis; L-arginine biosynthesis; L-arginine from L-ornithine and carbamoyl phosphate: step 2/3. Its pathway is nitrogen metabolism; urea cycle; (N(omega)-L-arginino)succinate from L-aspartate and L-citrulline: step 1/1. In terms of biological role, one of the enzymes of the urea cycle, the metabolic pathway transforming neurotoxic amonia produced by protein catabolism into inocuous urea in the liver of ureotelic animals. Catalyzes the formation of arginosuccinate from aspartate, citrulline and ATP and together with ASL it is responsible for the biosynthesis of arginine in most body tissues. In Xenopus tropicalis (Western clawed frog), this protein is Argininosuccinate synthase.